Consider the following 152-residue polypeptide: Ribosome maturation factor RimP (152 aa).

It belongs to the RimP family.

The protein localises to the cytoplasm. Required for maturation of 30S ribosomal subunits. The chain is Ribosome maturation factor RimP from Photorhabdus laumondii subsp. laumondii (strain DSM 15139 / CIP 105565 / TT01) (Photorhabdus luminescens subsp. laumondii).